Reading from the N-terminus, the 190-residue chain is Pyridoxal 5'-phosphate synthase subunit PdxT (190 aa).

46–48 (GES) contacts L-glutamine. The Nucleophile role is filled by Cys78. Residues Arg105 and 133-134 (IR) contribute to the L-glutamine site. Catalysis depends on charge relay system residues His169 and Glu171.

This sequence belongs to the glutaminase PdxT/SNO family. As to quaternary structure, in the presence of PdxS, forms a dodecamer of heterodimers. Only shows activity in the heterodimer.

It carries out the reaction aldehydo-D-ribose 5-phosphate + D-glyceraldehyde 3-phosphate + L-glutamine = pyridoxal 5'-phosphate + L-glutamate + phosphate + 3 H2O + H(+). The enzyme catalyses L-glutamine + H2O = L-glutamate + NH4(+). It participates in cofactor biosynthesis; pyridoxal 5'-phosphate biosynthesis. Catalyzes the hydrolysis of glutamine to glutamate and ammonia as part of the biosynthesis of pyridoxal 5'-phosphate. The resulting ammonia molecule is channeled to the active site of PdxS. This is Pyridoxal 5'-phosphate synthase subunit PdxT from Niallia circulans (Bacillus circulans).